A 164-amino-acid polypeptide reads, in one-letter code: MTDTQVTWLTQESHDRLKAELDQLIANRPVIAAEINDRREEGDLRENGGYHAAREEQGQQEARIRQLQDLLSNAKVGEAPKQSGVALPGSVVKVYYNGDKSDSETFLIATRQEGVSDGKLEVYSPNSPLGGALIDAKVGETRSYTVPNGSTVSVTLVSAEPYHS.

A coiled-coil region spans residues 50–76 (YHAAREEQGQQEARIRQLQDLLSNAKV).

This sequence belongs to the GreA/GreB family.

Functionally, necessary for efficient RNA polymerase transcription elongation past template-encoded arresting sites. The arresting sites in DNA have the property of trapping a certain fraction of elongating RNA polymerases that pass through, resulting in locked ternary complexes. Cleavage of the nascent transcript by cleavage factors such as GreA or GreB allows the resumption of elongation from the new 3'terminus. GreA releases sequences of 2 to 3 nucleotides. This is Transcription elongation factor GreA from Mycobacterium bovis (strain ATCC BAA-935 / AF2122/97).